The primary structure comprises 157 residues: 2-C-methyl-D-erythritol 2,4-cyclodiphosphate synthase (157 aa).

Residues Asp-8 and His-10 each contribute to the a divalent metal cation site. 4-CDP-2-C-methyl-D-erythritol 2-phosphate-binding positions include 8–10 (DVH) and 34–35 (HS). His-42 lines the a divalent metal cation pocket. Residues 56-58 (DIG), 61-65 (FPDTD), 132-135 (TTEE), and Phe-139 contribute to the 4-CDP-2-C-methyl-D-erythritol 2-phosphate site.

This sequence belongs to the IspF family. As to quaternary structure, homotrimer. Requires a divalent metal cation as cofactor.

The enzyme catalyses 4-CDP-2-C-methyl-D-erythritol 2-phosphate = 2-C-methyl-D-erythritol 2,4-cyclic diphosphate + CMP. It participates in isoprenoid biosynthesis; isopentenyl diphosphate biosynthesis via DXP pathway; isopentenyl diphosphate from 1-deoxy-D-xylulose 5-phosphate: step 4/6. Involved in the biosynthesis of isopentenyl diphosphate (IPP) and dimethylallyl diphosphate (DMAPP), two major building blocks of isoprenoid compounds. Catalyzes the conversion of 4-diphosphocytidyl-2-C-methyl-D-erythritol 2-phosphate (CDP-ME2P) to 2-C-methyl-D-erythritol 2,4-cyclodiphosphate (ME-CPP) with a corresponding release of cytidine 5-monophosphate (CMP). This is 2-C-methyl-D-erythritol 2,4-cyclodiphosphate synthase from Clostridium botulinum (strain Alaska E43 / Type E3).